The chain runs to 1827 residues: Sucrase-isomaltase, intestinal (1827 aa).

Residues 2-12 (ARKKFSGLEIS) lie on the Cytoplasmic side of the membrane. Position 7 is a phosphoserine; by PKA (serine 7). The helical; Signal-anchor for type II membrane protein transmembrane segment at 13 to 32 (LIVLFVIVTIIAIALIVVLA) threads the bilayer. Residues 33-1827 (TKTPAVDEIS…LEEPIEINWS (1795 aa)) are Lumenal-facing. The disordered stretch occupies residues 40–61 (EISDSTSTPATTRVTTNPSDSG). Residues 45-55 (TSTPATTRVTT) are compositionally biased toward low complexity. Residues 61 to 110 (GKCPNVLNDPVNVRINCIPEQFPTEGICAQRGCCWRPWNDSLIPWCFFVD) enclose the P-type 1 domain. Cystine bridges form between cysteine 63–cysteine 94, cysteine 77–cysteine 93, and cysteine 88–cysteine 106. Asparagine 99 is a glycosylation site (N-linked (GlcNAc...) asparagine). An isomaltase region spans residues 110–1007 (DNHGYNVQDM…DLQLNTANAR (898 aa)). Tyrosine 237 and tyrosine 239 each carry sulfotyrosine. 2 residues coordinate substrate: aspartate 264 and aspartate 388. A sulfotyrosine mark is found at tyrosine 391 and tyrosine 400. N-linked (GlcNAc...) asparagine glycosylation is found at asparagine 437 and asparagine 455. Catalysis depends on aspartate 505, which acts as the Nucleophile; for isomaltase activity. A disulfide bridge links cysteine 520 with cysteine 545. Arginine 588 lines the substrate pocket. Aspartate 604 functions as the For isomaltase activity in the catalytic mechanism. An intrachain disulfide couples cysteine 635 to cysteine 646. Histidine 662 contacts substrate. Sulfotyrosine is present on residues tyrosine 667, tyrosine 763, and tyrosine 765. 4 N-linked (GlcNAc...) asparagine glycosylation sites follow: asparagine 823, asparagine 855, asparagine 904, and asparagine 926. The 47-residue stretch at 932–978 (NQIFSENERFNCYPDADLATEQKCTQRGCVWRTGSSLSKAPECYFPR) folds into the P-type 2 domain. Residues 1008–1827 (IKLPSDPIST…LEEPIEINWS (820 aa)) form a sucrase region. Asparagine 1235, asparagine 1303, asparagine 1340, and asparagine 1354 each carry an N-linked (GlcNAc...) asparagine glycan. Aspartate 1394 (nucleophile; for sucrase activity) is an active-site residue. Glutamate 1397 acts as the For sucrase activity in catalysis. The N-linked (GlcNAc...) asparagine glycan is linked to asparagine 1403. The Proton donor; for isomaltase activity role is filled by aspartate 1500. Asparagine 1535, asparagine 1572, asparagine 1675, asparagine 1748, asparagine 1763, and asparagine 1815 each carry an N-linked (GlcNAc...) asparagine glycan.

This sequence belongs to the glycosyl hydrolase 31 family. The resulting sucrase and isomaltase subunits stay associated with one another in a complex by non-covalent linkages. Post-translationally, the precursor is proteolytically cleaved when exposed to pancreatic proteases in the intestinal lumen. In terms of processing, sulfated. As to expression, expressed in the poorly differentiated crypt cells of the small intestine as well as in the mature villous cells. Expressed at very low levels in the colon.

The protein resides in the apical cell membrane. It carries out the reaction Hydrolysis of sucrose and maltose by an alpha-D-glucosidase-type action.. The catalysed reaction is Hydrolysis of (1-&gt;6)-alpha-D-glucosidic linkages in some oligosaccharides produced from starch and glycogen by alpha-amylase, and in isomaltose.. Plays an important role in the final stage of carbohydrate digestion. Isomaltase activity is specific for both alpha-1,4- and alpha-1,6-oligosaccharides. This is Sucrase-isomaltase, intestinal (SI) from Homo sapiens (Human).